A 741-amino-acid chain; its full sequence is Ethylene receptor (741 aa).

A run of 3 helical transmembrane segments spans residues I23–V43, W53–L73, and V92–L112. Positions 65 and 69 each coordinate Cu cation. Positions D158–L307 constitute a GAF domain. The 240-residue stretch at V350–E589 folds into the Histidine kinase domain. At H353 the chain carries Phosphohistidine; by autocatalysis. The 118-residue stretch at K615–L732 folds into the Response regulatory domain. D663 bears the 4-aspartylphosphate mark.

The protein belongs to the ethylene receptor family. As to quaternary structure, homodimer; disulfide-linked. The cofactor is Cu cation. Post-translationally, activation probably requires a transfer of a phosphate group between a His in the transmitter domain and an Asp of the receiver domain.

The protein localises to the endoplasmic reticulum membrane. The enzyme catalyses ATP + protein L-histidine = ADP + protein N-phospho-L-histidine.. Functionally, may act early in the ethylene signal transduction pathway, possibly as an ethylene receptor, or as a regulator of the pathway. The sequence is that of Ethylene receptor (ETR1) from Malus domestica (Apple).